Here is an 83-residue protein sequence, read N- to C-terminus: Small ribosomal subunit protein bS18 (83 aa).

It belongs to the bacterial ribosomal protein bS18 family. Part of the 30S ribosomal subunit. Forms a tight heterodimer with protein bS6.

Functionally, binds as a heterodimer with protein bS6 to the central domain of the 16S rRNA, where it helps stabilize the platform of the 30S subunit. The polypeptide is Small ribosomal subunit protein bS18 (Methylobacterium radiotolerans (strain ATCC 27329 / DSM 1819 / JCM 2831 / NBRC 15690 / NCIMB 10815 / 0-1)).